A 196-amino-acid chain; its full sequence is Xanthine phosphoribosyltransferase (196 aa).

Xanthine-binding residues include leucine 26 and asparagine 33. 134-138 (ASGEA) provides a ligand contact to 5-phospho-alpha-D-ribose 1-diphosphate. Lysine 162 is a xanthine binding site.

This sequence belongs to the purine/pyrimidine phosphoribosyltransferase family. Xpt subfamily. As to quaternary structure, homodimer.

The protein localises to the cytoplasm. The enzyme catalyses XMP + diphosphate = xanthine + 5-phospho-alpha-D-ribose 1-diphosphate. The protein operates within purine metabolism; XMP biosynthesis via salvage pathway; XMP from xanthine: step 1/1. Converts the preformed base xanthine, a product of nucleic acid breakdown, to xanthosine 5'-monophosphate (XMP), so it can be reused for RNA or DNA synthesis. This chain is Xanthine phosphoribosyltransferase, found in Moorella thermoacetica (strain ATCC 39073 / JCM 9320).